We begin with the raw amino-acid sequence, 214 residues long: Probable septum site-determining protein MinC (214 aa).

This sequence belongs to the MinC family. Interacts with MinD and FtsZ.

Its function is as follows. Cell division inhibitor that blocks the formation of polar Z ring septums. Rapidly oscillates between the poles of the cell to destabilize FtsZ filaments that have formed before they mature into polar Z rings. Prevents FtsZ polymerization. In Caldanaerobacter subterraneus subsp. tengcongensis (strain DSM 15242 / JCM 11007 / NBRC 100824 / MB4) (Thermoanaerobacter tengcongensis), this protein is Probable septum site-determining protein MinC.